We begin with the raw amino-acid sequence, 241 residues long: Ribosomal RNA small subunit methyltransferase J (241 aa).

Residues 94–95 and Asp163 each bind S-adenosyl-L-methionine; that span reads RD.

This sequence belongs to the methyltransferase superfamily. RsmJ family.

Its subcellular location is the cytoplasm. It carries out the reaction guanosine(1516) in 16S rRNA + S-adenosyl-L-methionine = N(2)-methylguanosine(1516) in 16S rRNA + S-adenosyl-L-homocysteine + H(+). In terms of biological role, specifically methylates the guanosine in position 1516 of 16S rRNA. This chain is Ribosomal RNA small subunit methyltransferase J, found in Francisella tularensis subsp. tularensis (strain FSC 198).